The primary structure comprises 153 residues: MIALIQRVTQASVRVDGATVGAIGRGTLALVAIERGDGATQVSRMAERLLGYRMFPDSENRMNLSLAETGGGLLLVSQFTLAADTAKGMRPSFTPAADPETGRRLFDALVDATQRRHSPVATGRFGADMQVFLVNDGPVTFLLRCPPDRPPGG.

The Gly-cisPro motif, important for rejection of L-amino acids motif lies at 137 to 138 (GP).

This sequence belongs to the DTD family. As to quaternary structure, homodimer.

It localises to the cytoplasm. The catalysed reaction is glycyl-tRNA(Ala) + H2O = tRNA(Ala) + glycine + H(+). The enzyme catalyses a D-aminoacyl-tRNA + H2O = a tRNA + a D-alpha-amino acid + H(+). An aminoacyl-tRNA editing enzyme that deacylates mischarged D-aminoacyl-tRNAs. Also deacylates mischarged glycyl-tRNA(Ala), protecting cells against glycine mischarging by AlaRS. Acts via tRNA-based rather than protein-based catalysis; rejects L-amino acids rather than detecting D-amino acids in the active site. By recycling D-aminoacyl-tRNA to D-amino acids and free tRNA molecules, this enzyme counteracts the toxicity associated with the formation of D-aminoacyl-tRNA entities in vivo and helps enforce protein L-homochirality. This Methylococcus capsulatus (strain ATCC 33009 / NCIMB 11132 / Bath) protein is D-aminoacyl-tRNA deacylase.